A 308-amino-acid chain; its full sequence is D-alanine--D-alanine ligase (308 aa).

Residues 105–302 form the ATP-grasp domain; sequence KAIFKALGLD…FPELCERILD (198 aa). 133-188 is a binding site for ATP; it reads DLPFGVPCVVKPAGEGSSVGVQIVKDAARLADACREAARYKGDVVVERYVKGTEVN. 3 residues coordinate Mg(2+): aspartate 256, glutamate 269, and asparagine 271.

Belongs to the D-alanine--D-alanine ligase family. Requires Mg(2+) as cofactor. The cofactor is Mn(2+).

It localises to the cytoplasm. The catalysed reaction is 2 D-alanine + ATP = D-alanyl-D-alanine + ADP + phosphate + H(+). It functions in the pathway cell wall biogenesis; peptidoglycan biosynthesis. Its function is as follows. Cell wall formation. The polypeptide is D-alanine--D-alanine ligase (Anaeromyxobacter sp. (strain Fw109-5)).